The primary structure comprises 77 residues: uncharacterized protein (77 aa).

A helical membrane pass occupies residues 36 to 52; it reads FYQLILKVLSALLLLSV.

Its subcellular location is the membrane. This is an uncharacterized protein from Saccharomyces cerevisiae (strain ATCC 204508 / S288c) (Baker's yeast).